Here is a 139-residue protein sequence, read N- to C-terminus: Aspartate 1-decarboxylase (139 aa).

Serine 25 (schiff-base intermediate with substrate; via pyruvic acid) is an active-site residue. The residue at position 25 (serine 25) is a Pyruvic acid (Ser). Threonine 57 is a substrate binding site. The active-site Proton donor is the tyrosine 58. Position 73 to 75 (73 to 75 (GAA)) interacts with substrate. The tract at residues 116 to 139 (ELGEDPAHAPAGSGLKDPRHPEGE) is disordered.

This sequence belongs to the PanD family. Heterooctamer of four alpha and four beta subunits. The cofactor is pyruvate. In terms of processing, is synthesized initially as an inactive proenzyme, which is activated by self-cleavage at a specific serine bond to produce a beta-subunit with a hydroxyl group at its C-terminus and an alpha-subunit with a pyruvoyl group at its N-terminus.

It localises to the cytoplasm. The catalysed reaction is L-aspartate + H(+) = beta-alanine + CO2. Its pathway is cofactor biosynthesis; (R)-pantothenate biosynthesis; beta-alanine from L-aspartate: step 1/1. In terms of biological role, catalyzes the pyruvoyl-dependent decarboxylation of aspartate to produce beta-alanine. This Corynebacterium urealyticum (strain ATCC 43042 / DSM 7109) protein is Aspartate 1-decarboxylase.